A 107-amino-acid polypeptide reads, in one-letter code: Integration host factor subunit beta (107 aa).

The disordered stretch occupies residues 56 to 107; that stretch reads RPARVGRNPKSGEKVQVPEKFVPHFKPGKELRERVDGRAGEPLKADDPDDER. Residues 82-101 show a composition bias toward basic and acidic residues; the sequence is PGKELRERVDGRAGEPLKAD.

The protein belongs to the bacterial histone-like protein family. In terms of assembly, heterodimer of an alpha and a beta chain.

Its function is as follows. This protein is one of the two subunits of integration host factor, a specific DNA-binding protein that functions in genetic recombination as well as in transcriptional and translational control. In Burkholderia vietnamiensis (strain G4 / LMG 22486) (Burkholderia cepacia (strain R1808)), this protein is Integration host factor subunit beta.